Here is a 335-residue protein sequence, read N- to C-terminus: Beta-1,4-mannooligosaccharide phosphorylase (335 aa).

The protein belongs to the glycosyl hydrolase 130 family. In terms of assembly, homohexamer in solution.

The catalysed reaction is [(1-&gt;4)-beta-D-mannosyl](n) + phosphate = [(1-&gt;4)-beta-D-mannosyl](n-1) + alpha-D-mannose 1-phosphate. Functionally, catalyzes the phosphorolysis of beta-1,4-mannooligosaccharides to mannose 1-phosphate (Man1P) and shorter mannooligosaccharides. Can also catalyze the phosphorolysis of 4-O-beta-D-mannopyranosyl-D-glucopyranose (Man-Glc), but shows higher activity toward longer mannooligosaccharides. Involved in a mannan catabolic pathway which feeds into glycolysis. This chain is Beta-1,4-mannooligosaccharide phosphorylase, found in Ruminococcus albus (strain ATCC 27210 / DSM 20455 / JCM 14654 / NCDO 2250 / 7).